Consider the following 802-residue polypeptide: Potassium channel AKT2/3 (802 aa).

Over 1–79 (MDLKYSASHC…PMDSRYRCWE (79 aa)) the chain is Cytoplasmic. The chain crosses the membrane as a helical span at residues 80 to 100 (FYMVLLVAYSAWVYPFEVAFL). The Extracellular segment spans residues 101–109 (NSSPKRNLC). A helical transmembrane segment spans residues 110 to 130 (IADNIVDLFFAVDIVLTFFVA). Residues 131–153 (YIDERTQLLVREPKQIAVRYLST) are Cytoplasmic-facing. The helical transmembrane segment at 154–174 (WFLMDVASTIPFDAIGYLITG) threads the bilayer. Residues 175–183 (TSTLNITCN) are Extracellular-facing. Asn179 carries N-linked (GlcNAc...) asparagine glycosylation. A helical; Voltage-sensor membrane pass occupies residues 184-204 (LLGLLRFWRLRRVKHLFTRLE). Residues 205–218 (KDIRYSYFWIRCFR) are Cytoplasmic-facing. Residues 219-239 (LLSVTLFLVHCAGCSYYLIAD) form a helical membrane-spanning segment. Over 240 to 265 (RYPHQGKTWTDAIPNFTETSLSIRYI) the chain is Extracellular. Asn254 carries N-linked (GlcNAc...) asparagine glycosylation. Residues 266–285 (AAIYWSITTMTTVGYGDLHA) constitute an intramembrane region (pore-forming). Over 286 to 288 (SNT) the chain is Extracellular. Residues 289–309 (IEMVFITVYMLFNLGLTAYLI) traverse the membrane as a helical segment. Residues 310 to 802 (GNMTNLVVEG…KLYFVVNKII (493 aa)) lie on the Cytoplasmic side of the membrane. 394-513 (LFKGVSREIL…ATMLKNFLQH (120 aa)) serves as a coordination point for a nucleoside 3',5'-cyclic phosphate. 5 ANK repeats span residues 540-569 (NIAS…SPDI), 573-602 (KGKT…NIHI), 606-636 (NGNS…SDPH), 637-666 (IAGD…NVDT), and 670-699 (HGVT…DVVC). Residues 725–802 (RVSIYRGHPL…KLYFVVNKII (78 aa)) enclose the KHA domain.

It belongs to the potassium channel family. Plant (TC 1.A.1.4) subfamily. As to quaternary structure, the potassium channel is probably composed of a homo- or heterotetrameric complex of pore-forming subunits. Interacts with the phosphatase PPC2A and the kinase CIPK6. May interact with AKT1, KAT1 and KAT3. Interacts with SLAC1. Post-translationally, dephosphorylated by PP2CA. In terms of tissue distribution, expressed mainly in the phloem tissues throughout the plant but also, at a lower level, in leaf epiderm, mesophyll and guard cells.

Its subcellular location is the endoplasmic reticulum membrane. Its function is as follows. Highly selective and weak inward-rectifying potassium channel. Plays a role in both loading and unloading potassium into/from the phloem sap. Seems to control sugar loading into phloem via a voltage-dependent process. Blocked by physiological concentrations of external calcium and by external acidification. May interact with the cytoskeleton or with regulatory proteins. Dephosphorylation by PP2CA not only leads to the inhibition of potassium currents but also to an increase of the voltage-dependence of the channel. Regulated by the CBL4/CIPK6 calcium sensor/protein kinase complex via a kinase interaction-dependent but phosphorylation-independent translocation of the channel to the plasma membrane. In Arabidopsis thaliana (Mouse-ear cress), this protein is Potassium channel AKT2/3 (AKT2).